The sequence spans 476 residues: ATP synthase subunit beta (476 aa).

ATP is bound at residue 162 to 169; sequence GGAGVGKT.

The protein belongs to the ATPase alpha/beta chains family. As to quaternary structure, F-type ATPases have 2 components, CF(1) - the catalytic core - and CF(0) - the membrane proton channel. CF(1) has five subunits: alpha(3), beta(3), gamma(1), delta(1), epsilon(1). CF(0) has three main subunits: a(1), b(2) and c(9-12). The alpha and beta chains form an alternating ring which encloses part of the gamma chain. CF(1) is attached to CF(0) by a central stalk formed by the gamma and epsilon chains, while a peripheral stalk is formed by the delta and b chains.

Its subcellular location is the cell membrane. The enzyme catalyses ATP + H2O + 4 H(+)(in) = ADP + phosphate + 5 H(+)(out). In terms of biological role, produces ATP from ADP in the presence of a proton gradient across the membrane. The catalytic sites are hosted primarily by the beta subunits. The sequence is that of ATP synthase subunit beta from Mycoplasma capricolum subsp. capricolum (strain California kid / ATCC 27343 / NCTC 10154).